The chain runs to 119 residues: V-type proton ATPase subunit F (119 aa).

This sequence belongs to the V-ATPase F subunit family. In terms of assembly, V-ATPase is a heteromultimeric enzyme made up of two complexes: the ATP-hydrolytic V1 complex and the proton translocation V0 complex. The V1 complex consists of three catalytic AB heterodimers that form a heterohexamer, three peripheral stalks each consisting of EG heterodimers, one central rotor including subunits D and F, and the regulatory subunits C and H. The proton translocation complex V0 consists of the proton transport subunit a, a ring of proteolipid subunits c9c'', rotary subunit d, subunits e and f, and the accessory subunits ATP6AP1/Ac45 and ATP6AP2/PRR. Expressed in brain (at protein level).

The protein resides in the cytoplasmic vesicle. Its subcellular location is the secretory vesicle. The protein localises to the synaptic vesicle membrane. It is found in the clathrin-coated vesicle membrane. Subunit of the V1 complex of vacuolar(H+)-ATPase (V-ATPase), a multisubunit enzyme composed of a peripheral complex (V1) that hydrolyzes ATP and a membrane integral complex (V0) that translocates protons. V-ATPase is responsible for acidifying and maintaining the pH of intracellular compartments and in some cell types, is targeted to the plasma membrane, where it is responsible for acidifying the extracellular environment. The polypeptide is V-type proton ATPase subunit F (ATP6V1F) (Bos taurus (Bovine)).